The sequence spans 558 residues: CTP synthase (558 aa).

Residues 1–267 are amidoligase domain; that stretch reads MTKFVFVTGG…AQQTLELLNL (267 aa). Ser13 is a binding site for CTP. Ser13 contributes to the UTP binding site. ATP contacts are provided by residues 14–19 and Asp71; that span reads SIGKGI. The Mg(2+) site is built by Asp71 and Glu141. CTP contacts are provided by residues 148–150, 188–193, and Lys224; these read DIE and KTKPTQ. Residues 188–193 and Lys224 each bind UTP; that span reads KTKPTQ. One can recognise a Glutamine amidotransferase type-1 domain in the interval 292–534; that stretch reads EVALVGKYVQ…VKASVDYNHV (243 aa). L-glutamine is bound at residue Gly354. The Nucleophile; for glutamine hydrolysis role is filled by Cys381. Residues 382 to 385, Glu405, and Arg462 each bind L-glutamine; that span reads MGMQ. Active-site residues include His507 and Glu509.

Belongs to the CTP synthase family. Homotetramer.

The catalysed reaction is UTP + L-glutamine + ATP + H2O = CTP + L-glutamate + ADP + phosphate + 2 H(+). The enzyme catalyses L-glutamine + H2O = L-glutamate + NH4(+). It carries out the reaction UTP + NH4(+) + ATP = CTP + ADP + phosphate + 2 H(+). It participates in pyrimidine metabolism; CTP biosynthesis via de novo pathway; CTP from UDP: step 2/2. Allosterically activated by GTP, when glutamine is the substrate; GTP has no effect on the reaction when ammonia is the substrate. The allosteric effector GTP functions by stabilizing the protein conformation that binds the tetrahedral intermediate(s) formed during glutamine hydrolysis. Inhibited by the product CTP, via allosteric rather than competitive inhibition. Catalyzes the ATP-dependent amination of UTP to CTP with either L-glutamine or ammonia as the source of nitrogen. Regulates intracellular CTP levels through interactions with the four ribonucleotide triphosphates. This chain is CTP synthase, found in Gloeothece citriformis (strain PCC 7424) (Cyanothece sp. (strain PCC 7424)).